A 457-amino-acid polypeptide reads, in one-letter code: Ig mu chain C region (457 aa).

The segment at 1–105 (SSSAPLLFPL…GEKEKKVELQ (105 aa)) is CH1. Cys27 and Cys89 form a disulfide bridge. 2 N-linked (GlcNAc...) asparagine glycosylation sites follow: Asn45 and Asn113. Residues 106–220 (VTPELPPNVS…KNVSSVCMGD (115 aa)) form a CH2 region. Cys136 and Cys200 are oxidised to a cystine. N-linked (GlcNAc...) asparagine glycosylation is found at Asn212, Asn276, and Asn283. The interval 221–326 (DTSTGISVFL…PLKQSLSRPK (106 aa)) is CH3. 2 disulfide bridges follow: Cys248–Cys307 and Cys355–Cys417. The interval 327-457 (DVANDPPSVF…VLSDTASTCY (131 aa)) is CH4. Asn444 is a glycosylation site (N-linked (GlcNAc...) asparagine).

The protein is Ig mu chain C region of Suncus murinus (Asian house shrew).